We begin with the raw amino-acid sequence, 83 residues long: U5-theraphotoxin-Hs1b 1 (83 aa).

The N-terminal stretch at 1 to 21 (MKTSMFLTLTGLVLLFVVCYA) is a signal peptide. A propeptide spanning residues 22 to 49 (SESEEKEFPKELLSSIFAADSDFKEEER) is cleaved from the precursor. 3 disulfide bridges follow: Cys51–Cys63, Cys56–Cys68, and Cys62–Cys75.

Belongs to the neurotoxin 10 (Hwtx-1) family. 51 (Hntx-8) subfamily. Hntx-8 sub-subfamily. In terms of tissue distribution, expressed by the venom gland.

It is found in the secreted. Functionally, weakly inhibits 5HT3A receptors and Kv1.3/KCNA3 voltage-gated potassium channels. Agglutinates erythrocytes. This Cyriopagopus schmidti (Chinese bird spider) protein is U5-theraphotoxin-Hs1b 1.